Consider the following 130-residue polypeptide: Small ribosomal subunit protein uS9 (130 aa).

Belongs to the universal ribosomal protein uS9 family.

The polypeptide is Small ribosomal subunit protein uS9 (Bacillus mycoides (strain KBAB4) (Bacillus weihenstephanensis)).